The sequence spans 311 residues: Cathepsin B (311 aa).

Residues 1 to 19 form the signal peptide; it reads MRVLLSLVVILFIINSAFA. Residues 20–78 constitute a propeptide that is removed on maturation; the sequence is VKINIGRPTKSHKTIHHETWVEEQTDQFDNIKVGQLLGFKRSPNRPKLQIKSYDPLGVQ. N-linked (GlcNAc...) asparagine glycosylation occurs at Asn-91. 5 disulfides stabilise this stretch: Cys-92/Cys-121, Cys-104/Cys-145, Cys-138/Cys-191, Cys-167/Cys-195, and Cys-175/Cys-182. Cys-107 is a catalytic residue. N-linked (GlcNAc...) asparagine glycosylation occurs at Asn-198. Catalysis depends on residues His-261 and Asn-281. N-linked (GlcNAc...) asparagine glycosylation is present at Asn-290.

It belongs to the peptidase C1 family.

It is found in the lysosome. The enzyme catalyses Hydrolysis of proteins with broad specificity for peptide bonds. Preferentially cleaves -Arg-Arg-|-Xaa bonds in small molecule substrates (thus differing from cathepsin L). In addition to being an endopeptidase, shows peptidyl-dipeptidase activity, liberating C-terminal dipeptides.. Functionally, thiol protease which is believed to participate in intracellular degradation and turnover of proteins. This chain is Cathepsin B (ctsB), found in Dictyostelium discoideum (Social amoeba).